The following is a 1172-amino-acid chain: Pesticidal crystal protein Cry1Ha (1172 aa).

The protein belongs to the delta endotoxin family.

Promotes colloidosmotic lysis by binding to the midgut epithelial cells of insects. The polypeptide is Pesticidal crystal protein Cry1Ha (cry1Ha) (Bacillus thuringiensis).